The chain runs to 260 residues: MPSSKKVAPAPLATKSKASTSTKNPLFESTPKNFGIGQSIQPKRNLSRFVKWPEYVRLQRQKKILSLRLKVPPSIAQFSQTLDKNTAAQAFKLLNKYRPETSAEKKERLTKEAAAIAEGKTAKDVSPKPVVVKYGLNHVVSLIENKKAKLVLIANDVDPIELVVFLPALCKKMGVPYAIVKGKARLGTLVHKKTSAVAALTEVNSADEAELSKLVSTINANYIEKYEENRKHWGGGIMGSKANDKIAKKAKAAAAAVSTA.

The tract at residues 1–34 (MPSSKKVAPAPLATKSKASTSTKNPLFESTPKNF) is disordered.

Belongs to the eukaryotic ribosomal protein eL8 family. Component of the large ribosomal subunit. Mature ribosomes consist of a small (40S) and a large (60S) subunit. The 40S subunit contains about 32 different proteins and 1 molecule of RNA (18S). The 60S subunit contains 45 different proteins and 3 molecules of RNA (25S, 5.8S and 5S).

It localises to the cytoplasm. Functionally, component of the ribosome, a large ribonucleoprotein complex responsible for the synthesis of proteins in the cell. The small ribosomal subunit (SSU) binds messenger RNAs (mRNAs) and translates the encoded message by selecting cognate aminoacyl-transfer RNA (tRNA) molecules. The large subunit (LSU) contains the ribosomal catalytic site termed the peptidyl transferase center (PTC), which catalyzes the formation of peptide bonds, thereby polymerizing the amino acids delivered by tRNAs into a polypeptide chain. The nascent polypeptides leave the ribosome through a tunnel in the LSU and interact with protein factors that function in enzymatic processing, targeting, and the membrane insertion of nascent chains at the exit of the ribosomal tunnel. In Candida albicans (strain SC5314 / ATCC MYA-2876) (Yeast), this protein is Large ribosomal subunit protein eL8A.